Consider the following 270-residue polypeptide: Ethanolamine ammonia-lyase small subunit (270 aa).

Adenosylcob(III)alamin-binding residues include valine 166, glutamate 187, and cysteine 216.

The protein belongs to the EutC family. In terms of assembly, the basic unit is a heterodimer which dimerizes to form tetramers. The heterotetramers trimerize; 6 large subunits form a core ring with 6 small subunits projecting outwards. It depends on adenosylcob(III)alamin as a cofactor.

Its subcellular location is the bacterial microcompartment. The enzyme catalyses ethanolamine = acetaldehyde + NH4(+). The protein operates within amine and polyamine degradation; ethanolamine degradation. Functionally, catalyzes the deamination of various vicinal amino-alcohols to oxo compounds. Allows this organism to utilize ethanolamine as the sole source of nitrogen and carbon in the presence of external vitamin B12. This Ralstonia nicotianae (strain ATCC BAA-1114 / GMI1000) (Ralstonia solanacearum) protein is Ethanolamine ammonia-lyase small subunit.